Reading from the N-terminus, the 430-residue chain is Gamma-glutamyl phosphate reductase (430 aa).

Belongs to the gamma-glutamyl phosphate reductase family.

The protein resides in the cytoplasm. It carries out the reaction L-glutamate 5-semialdehyde + phosphate + NADP(+) = L-glutamyl 5-phosphate + NADPH + H(+). It participates in amino-acid biosynthesis; L-proline biosynthesis; L-glutamate 5-semialdehyde from L-glutamate: step 2/2. Functionally, catalyzes the NADPH-dependent reduction of L-glutamate 5-phosphate into L-glutamate 5-semialdehyde and phosphate. The product spontaneously undergoes cyclization to form 1-pyrroline-5-carboxylate. The sequence is that of Gamma-glutamyl phosphate reductase from Rhodopseudomonas palustris (strain BisB5).